Consider the following 186-residue polypeptide: MELEAVLKERTAAAGDPGRVLGAWVRSGWSAAGPSVLESEGGSGGPLAFESTSSRILELASKDNEPEYEALPDGSNVTTHMLAGAVAGVMEHCLMYPVDCVKTRMQSLQPDPAARYRNVMDALSKIVRTEGFWRPLRGLNVTATGAGPAHALYFACYEKLKKTLSDIIHPGGNSHIANGTDYSCPA.

The stretch at 75–163 (SNVTTHMLAG…FACYEKLKKT (89 aa)) is one Solcar repeat. The next 3 membrane-spanning stretches (helical) occupy residues 77-96 (VTTHMLAGAVAGVMEHCLMY), 137-157 (RGLNVTATGAGPAHALYFACY), and 172-185 (GNSHIANGTDYSCP).

This sequence belongs to the mitochondrial carrier (TC 2.A.29) family.

The protein resides in the mitochondrion inner membrane. The catalysed reaction is Fe(2+)(in) = Fe(2+)(out). Its function is as follows. Mitochondrial iron transporter that mediates iron uptake. Probably required for heme synthesis of hemoproteins and Fe-S cluster assembly in non-erythroid cells. This is Mitoferrin-2A (slc25a28-a) from Xenopus laevis (African clawed frog).